Consider the following 444-residue polypeptide: N-succinylarginine dihydrolase (444 aa).

Residues 19-28 (AGLSFGNVAS), Asn-110, and 137-138 (HR) each bind substrate. Glu-174 is an active-site residue. Arg-214 lines the substrate pocket. His-250 is a catalytic residue. Asp-252 and Asn-362 together coordinate substrate. Cys-368 (nucleophile) is an active-site residue.

The protein belongs to the succinylarginine dihydrolase family. In terms of assembly, homodimer.

The enzyme catalyses N(2)-succinyl-L-arginine + 2 H2O + 2 H(+) = N(2)-succinyl-L-ornithine + 2 NH4(+) + CO2. The protein operates within amino-acid degradation; L-arginine degradation via AST pathway; L-glutamate and succinate from L-arginine: step 2/5. Its function is as follows. Catalyzes the hydrolysis of N(2)-succinylarginine into N(2)-succinylornithine, ammonia and CO(2). This chain is N-succinylarginine dihydrolase, found in Shewanella baltica (strain OS185).